Consider the following 62-residue polypeptide: MALDYKLLEIVACPICKGKLNYDKERSELVCRADKLAYPVEDDIPVLLENRARPLKEEELPL.

It belongs to the UPF0434 family.

This Tolumonas auensis (strain DSM 9187 / NBRC 110442 / TA 4) protein is UPF0434 protein Tola_2233.